A 323-amino-acid polypeptide reads, in one-letter code: Galectin-4 (323 aa).

Galectin domains are found at residues 19–150 (YYQP…INFI) and 194–323 (YFGR…YVQI). 256-262 (WGSEEKK) is a binding site for a beta-D-galactoside. Ser258 bears the Phosphoserine mark.

As to quaternary structure, monomer.

Functionally, galectin that binds lactose and a related range of sugars. May be involved in the assembly of adherens junctions. This chain is Galectin-4 (LGALS4), found in Homo sapiens (Human).